Reading from the N-terminus, the 440-residue chain is Chromosomal replication initiator protein DnaA (440 aa).

The interval 1–72 (MTELDSLWEA…KEFAQRELGR (72 aa)) is domain I, interacts with DnaA modulators. Residues 72–103 (RNIEPHYVLEGEFTYTNKKTEDDPTPSFEMDT) form a domain II region. The interval 104–320 (PLNPHYNFGT…GALTKVQAFA (217 aa)) is domain III, AAA+ region. 4 residues coordinate ATP: Gly-148, Gly-150, Lys-151, and Thr-152. A domain IV, binds dsDNA region spans residues 321-440 (NLSGERITPS…ITKLKAKLRS (120 aa)).

Belongs to the DnaA family. As to quaternary structure, oligomerizes as a right-handed, spiral filament on DNA at oriC.

It localises to the cytoplasm. Functionally, plays an essential role in the initiation and regulation of chromosomal replication. ATP-DnaA binds to the origin of replication (oriC) to initiate formation of the DNA replication initiation complex once per cell cycle. Binds the DnaA box (a 9 base pair repeat at the origin) and separates the double-stranded (ds)DNA. Forms a right-handed helical filament on oriC DNA; dsDNA binds to the exterior of the filament while single-stranded (ss)DNA is stabiized in the filament's interior. The ATP-DnaA-oriC complex binds and stabilizes one strand of the AT-rich DNA unwinding element (DUE), permitting loading of DNA polymerase. After initiation quickly degrades to an ADP-DnaA complex that is not apt for DNA replication. Binds acidic phospholipids. The chain is Chromosomal replication initiator protein DnaA from Limosilactobacillus reuteri (strain DSM 20016) (Lactobacillus reuteri).